Reading from the N-terminus, the 253-residue chain is Carboxy-S-adenosyl-L-methionine synthase (253 aa).

S-adenosyl-L-methionine is bound by residues Tyr-49, 74-76 (GCS), 98-99 (DN), and Asn-141.

Belongs to the class I-like SAM-binding methyltransferase superfamily. Cx-SAM synthase family.

The enzyme catalyses prephenate + S-adenosyl-L-methionine = carboxy-S-adenosyl-L-methionine + 3-phenylpyruvate + H2O. Functionally, catalyzes the conversion of S-adenosyl-L-methionine (SAM) to carboxy-S-adenosyl-L-methionine (Cx-SAM). This Trichodesmium erythraeum (strain IMS101) protein is Carboxy-S-adenosyl-L-methionine synthase.